Reading from the N-terminus, the 368-residue chain is Quinolinate synthase (368 aa).

Iminosuccinate contacts are provided by H46 and S63. C110 lines the [4Fe-4S] cluster pocket. Iminosuccinate-binding positions include 141–143 (YVN) and S162. A [4Fe-4S] cluster-binding site is contributed by C230. Residues 256–258 (HPE) and T273 each bind iminosuccinate. Position 320 (C320) interacts with [4Fe-4S] cluster.

It belongs to the quinolinate synthase family. Type 3 subfamily. Requires [4Fe-4S] cluster as cofactor.

It is found in the cytoplasm. It catalyses the reaction iminosuccinate + dihydroxyacetone phosphate = quinolinate + phosphate + 2 H2O + H(+). The protein operates within cofactor biosynthesis; NAD(+) biosynthesis; quinolinate from iminoaspartate: step 1/1. Catalyzes the condensation of iminoaspartate with dihydroxyacetone phosphate to form quinolinate. The protein is Quinolinate synthase of Bacillus thuringiensis subsp. konkukian (strain 97-27).